The primary structure comprises 171 residues: Ribosome maturation factor RimM (171 aa).

The region spanning 97–170 (EGEYYYHEII…LVTIHVMEGL (74 aa)) is the PRC barrel domain.

Belongs to the RimM family. In terms of assembly, binds ribosomal protein uS19.

It is found in the cytoplasm. Its function is as follows. An accessory protein needed during the final step in the assembly of 30S ribosomal subunit, possibly for assembly of the head region. Essential for efficient processing of 16S rRNA. May be needed both before and after RbfA during the maturation of 16S rRNA. It has affinity for free ribosomal 30S subunits but not for 70S ribosomes. This chain is Ribosome maturation factor RimM, found in Bacillus cereus (strain ZK / E33L).